The sequence spans 453 residues: Trigger factor (453 aa).

Positions 171–256 (GDRVTISFKG…ASLIEAPQDI (86 aa)) constitute a PPIase FKBP-type domain.

It belongs to the FKBP-type PPIase family. Tig subfamily.

The protein resides in the cytoplasm. The catalysed reaction is [protein]-peptidylproline (omega=180) = [protein]-peptidylproline (omega=0). Its function is as follows. Involved in protein export. Acts as a chaperone by maintaining the newly synthesized protein in an open conformation. Functions as a peptidyl-prolyl cis-trans isomerase. The chain is Trigger factor from Nitrobacter hamburgensis (strain DSM 10229 / NCIMB 13809 / X14).